Here is a 1405-residue protein sequence, read N- to C-terminus: Protein crumbs homolog 1 (1405 aa).

A signal peptide spans 1 to 27 (MKLKRTAYLLFLYLSSSLLICIKNSFC). The Extracellular portion of the chain corresponds to 28–1339 (NKNNTRCLSG…RCELDLADDR (1312 aa)). Residues 30–67 (NNTRCLSGPCQNNSTCKHFPQDNNCCLDTANNLDKDCE) enclose the EGF-like 1; atypical domain. Disulfide bonds link cysteine 34/cysteine 45, cysteine 39/cysteine 54, cysteine 55/cysteine 66, cysteine 73/cysteine 84, cysteine 78/cysteine 95, cysteine 97/cysteine 106, cysteine 113/cysteine 124, cysteine 118/cysteine 133, cysteine 135/cysteine 144, cysteine 151/cysteine 162, cysteine 156/cysteine 171, cysteine 173/cysteine 182, cysteine 189/cysteine 200, cysteine 194/cysteine 209, cysteine 211/cysteine 220, cysteine 227/cysteine 238, cysteine 232/cysteine 247, cysteine 249/cysteine 258, cysteine 265/cysteine 276, cysteine 270/cysteine 285, cysteine 287/cysteine 297, cysteine 304/cysteine 315, cysteine 309/cysteine 324, cysteine 326/cysteine 335, cysteine 342/cysteine 353, cysteine 347/cysteine 382, cysteine 384/cysteine 393, cysteine 400/cysteine 411, cysteine 405/cysteine 420, cysteine 422/cysteine 437, cysteine 444/cysteine 455, cysteine 449/cysteine 468, and cysteine 470/cysteine 479. Residue asparagine 41 is glycosylated (N-linked (GlcNAc...) asparagine). EGF-like domains lie at 69 to 107 (LKDPCFSSPCQGIATCVKIPGEGNFLCQCPPGYSGLNCE) and 109 to 145 (ATNSCGGNLCQHGGTCRKDPEHPVCICPPGYAGRFCE). Positions 147-183 (DHNECASSPCHNGAMCQDGINGYSCFCVPGYQGRHCD) constitute an EGF-like 4; calcium-binding domain. An EGF-like 5; calcium-binding domain is found at 185–221 (EVDECVSDPCKNEAVCLNEIGRYTCVCPQEFSGVNCE). The 37-residue stretch at 223–259 (EIDECRSQPCLHGATCQDAPGGYSCDCAPGFLGEHCE) folds into the EGF-like 6; calcium-binding domain. EGF-like domains follow at residues 261-298 (SVNECESQPCLHGGLCVDGRNSYHCDCTGSGFTGMHCE), 300-336 (LIPLCWSKPCHNDATCEDTVDSYICHCRPGYTGALCE), 338-394 (DINE…IHCE), 396-438 (DVDE…ENCS), and 440-480 (ILLG…PLCE). The region spanning 482–669 (VTTLSFGSNG…GLSSNVKAGC (188 aa)) is the Laminin G-like 1 domain. Asparagine 560 and asparagine 656 each carry an N-linked (GlcNAc...) asparagine glycan. 4 disulfide bridges follow: cysteine 641–cysteine 669, cysteine 675–cysteine 686, cysteine 680–cysteine 695, and cysteine 697–cysteine 706. Residues 671–707 (GKDWCESQPCQNRGRCINLWQGYQCECDRPYTGSNCL) form the EGF-like 12 domain. The Laminin G-like 2 domain maps to 713 to 884 (GRFGQDDSTG…PILVNVTQGC (172 aa)). N-linked (GlcNAc...) asparagine glycosylation is found at asparagine 756 and asparagine 879. 6 cysteine pairs are disulfide-bonded: cysteine 850-cysteine 884, cysteine 890-cysteine 901, cysteine 895-cysteine 910, cysteine 912-cysteine 921, cysteine 927-cysteine 938, and cysteine 932-cysteine 947. EGF-like domains are found at residues 886-922 (GDNTCKSNPCHNGGVCHSLWDDFSCSCPTNTAGRACE) and 923-959 (QVQWCQLSPCPPTAECQLLPQGFECIANAVFSGLSRE). A Laminin G-like 3 domain is found at 950-1136 (NAVFSGLSRE…VSTNMVLTGC (187 aa)). 3 N-linked (GlcNAc...) asparagine glycosylation sites follow: asparagine 967, asparagine 974, and asparagine 999. 16 disulfide bridges follow: cysteine 1095-cysteine 1136, cysteine 1142-cysteine 1153, cysteine 1147-cysteine 1162, cysteine 1164-cysteine 1173, cysteine 1180-cysteine 1190, cysteine 1185-cysteine 1199, cysteine 1201-cysteine 1210, cysteine 1217-cysteine 1228, cysteine 1222-cysteine 1237, cysteine 1239-cysteine 1248, cysteine 1258-cysteine 1273, cysteine 1267-cysteine 1282, cysteine 1284-cysteine 1293, cysteine 1300-cysteine 1311, cysteine 1305-cysteine 1320, and cysteine 1322-cysteine 1331. In terms of domain architecture, EGF-like 15 spans 1138 to 1174 (PSNACHSSPCLHGGNCEDSYSSYRCACLSGWSGTHCE). An EGF-like 16; calcium-binding domain is found at 1176–1211 (NIDECFSSPCIHGNCSDGVAAYHCRCEPGYTGVNCE). Asparagine 1189 is a glycosylation site (N-linked (GlcNAc...) asparagine). EGF-like domains lie at 1213-1249 (DVDNCKSHQCANGATCVPEAHGYSCLCFGNFTGRFCR) and 1254-1294 (PSTV…EWCE). N-linked (GlcNAc...) asparagine glycosylation is found at asparagine 1242 and asparagine 1264. Residues 1296–1332 (DINECASDPCINGGLCRDLVNRFLCICDVAFAGERCE) form the EGF-like 19; calcium-binding domain. A helical transmembrane segment spans residues 1340-1360 (LLGIFTAVGSGTLALFFILLL). Over 1361-1405 (AGVASLIASNKRATQGTYSPSGQEKAGPRVEMWIRMPPPALERLI) the chain is Cytoplasmic.

It belongs to the Crumbs protein family. As to quaternary structure, component of a complex composed of PALS1, CRB1 and EPB41L5. Within the complex, interacts (via intracellular domain) with PALS1 and EPB41L5 (via FERM domain). Forms a complex with MPP4 and PALS1. Interacts with MPDZ/MUPP1 and MPP4. Glycosylated. In terms of tissue distribution, expressed in the kidney, lung, stomach and testis. Expressed in the brain. Expressed in the retina of the eye. Expressed in the outer nuclear layer, photoreceptor layer and inner nuclear layer of the retina. Expressed in Mueller cell radial processes in the inner nuclear layer, in apical processes sclerad to the external limiting membrane, and in the subapical region, adjacent to the adherens junction of retinal photoreceptors. In the brain, expressed in the granular layer of the cerebellum, the hippocampal dentate gyrus, the olfactory bulbs, the subventricular region lining the telencephalic ventricles and the rostral migratory stream. Ubiquitously expressed.

It localises to the apical cell membrane. It is found in the secreted. Its subcellular location is the cell projection. The protein localises to the cilium. The protein resides in the photoreceptor outer segment. It localises to the photoreceptor inner segment. It is found in the cytoplasm. Its subcellular location is the cell junction. The protein localises to the focal adhesion. Its function is as follows. Plays a role in photoreceptor morphogenesis in the retina. May maintain cell polarization and adhesion. May play a role in epidermal tissue morphogenesis. May function in cell attachment for stratified epithelial organization. This Mus musculus (Mouse) protein is Protein crumbs homolog 1 (Crb1).